A 99-amino-acid polypeptide reads, in one-letter code: Malonate decarboxylase acyl carrier protein (99 aa).

The residue at position 25 (Ser-25) is an O-(phosphoribosyl dephospho-coenzyme A)serine.

Belongs to the MdcC family. In terms of processing, covalently binds the prosthetic group of malonate decarboxylase.

The protein resides in the cytoplasm. Functionally, subunit of malonate decarboxylase, it is an acyl carrier protein to which acetyl and malonyl thioester residues are bound via a 2'-(5''-phosphoribosyl)-3'-dephospho-CoA prosthetic group and turn over during the catalytic mechanism. This Pseudomonas syringae pv. syringae (strain B728a) protein is Malonate decarboxylase acyl carrier protein.